A 473-amino-acid polypeptide reads, in one-letter code: Probable aspartokinase (473 aa).

ACT domains lie at 323–392 (IFGA…FLNN) and 409–473 (VVGA…KTNS).

Belongs to the aspartokinase family.

It catalyses the reaction L-aspartate + ATP = 4-phospho-L-aspartate + ADP. The protein operates within amino-acid biosynthesis; L-lysine biosynthesis via DAP pathway; (S)-tetrahydrodipicolinate from L-aspartate: step 1/4. Its pathway is amino-acid biosynthesis; L-methionine biosynthesis via de novo pathway; L-homoserine from L-aspartate: step 1/3. It functions in the pathway amino-acid biosynthesis; L-threonine biosynthesis; L-threonine from L-aspartate: step 1/5. In Methanocaldococcus jannaschii (strain ATCC 43067 / DSM 2661 / JAL-1 / JCM 10045 / NBRC 100440) (Methanococcus jannaschii), this protein is Probable aspartokinase.